A 656-amino-acid chain; its full sequence is tRNA 5-methylaminomethyl-2-thiouridine biosynthesis bifunctional protein MnmC (656 aa).

The tract at residues 1–236 is tRNA (mnm(5)s(2)U34)-methyltransferase; that stretch reads MTDPLIPAVL…KRAMLVGRFA (236 aa). An FAD-dependent cmnm(5)s(2)U34 oxidoreductase region spans residues 260 to 656; sequence IGTGLAGCAV…LRALRQGTVS (397 aa).

The protein in the N-terminal section; belongs to the methyltransferase superfamily. tRNA (mnm(5)s(2)U34)-methyltransferase family. It in the C-terminal section; belongs to the DAO family. The cofactor is FAD.

It localises to the cytoplasm. The catalysed reaction is 5-aminomethyl-2-thiouridine(34) in tRNA + S-adenosyl-L-methionine = 5-methylaminomethyl-2-thiouridine(34) in tRNA + S-adenosyl-L-homocysteine + H(+). Catalyzes the last two steps in the biosynthesis of 5-methylaminomethyl-2-thiouridine (mnm(5)s(2)U) at the wobble position (U34) in tRNA. Catalyzes the FAD-dependent demodification of cmnm(5)s(2)U34 to nm(5)s(2)U34, followed by the transfer of a methyl group from S-adenosyl-L-methionine to nm(5)s(2)U34, to form mnm(5)s(2)U34. The sequence is that of tRNA 5-methylaminomethyl-2-thiouridine biosynthesis bifunctional protein MnmC from Paraburkholderia xenovorans (strain LB400).